A 302-amino-acid polypeptide reads, in one-letter code: 33 kDa chaperonin (302 aa).

2 cysteine pairs are disulfide-bonded: Cys-234/Cys-236 and Cys-267/Cys-270.

Belongs to the HSP33 family. In terms of processing, under oxidizing conditions two disulfide bonds are formed involving the reactive cysteines. Under reducing conditions zinc is bound to the reactive cysteines and the protein is inactive.

It is found in the cytoplasm. Redox regulated molecular chaperone. Protects both thermally unfolding and oxidatively damaged proteins from irreversible aggregation. Plays an important role in the bacterial defense system toward oxidative stress. The chain is 33 kDa chaperonin from Neisseria meningitidis serogroup A / serotype 4A (strain DSM 15465 / Z2491).